A 195-amino-acid polypeptide reads, in one-letter code: Orotate phosphoribosyltransferase (195 aa).

A 5-phospho-alpha-D-ribose 1-diphosphate-binding site is contributed by 117-125 (EDITTTGGS). Orotate-binding residues include T121 and R149.

Belongs to the purine/pyrimidine phosphoribosyltransferase family. PyrE subfamily. In terms of assembly, homodimer. It depends on Mg(2+) as a cofactor.

The catalysed reaction is orotidine 5'-phosphate + diphosphate = orotate + 5-phospho-alpha-D-ribose 1-diphosphate. The protein operates within pyrimidine metabolism; UMP biosynthesis via de novo pathway; UMP from orotate: step 1/2. Catalyzes the transfer of a ribosyl phosphate group from 5-phosphoribose 1-diphosphate to orotate, leading to the formation of orotidine monophosphate (OMP). The sequence is that of Orotate phosphoribosyltransferase from Acidithiobacillus ferrooxidans (strain ATCC 53993 / BNL-5-31) (Leptospirillum ferrooxidans (ATCC 53993)).